The following is a 129-amino-acid chain: Small ribosomal subunit protein eS6 (129 aa).

Belongs to the eukaryotic ribosomal protein eS6 family.

In Archaeoglobus fulgidus (strain ATCC 49558 / DSM 4304 / JCM 9628 / NBRC 100126 / VC-16), this protein is Small ribosomal subunit protein eS6.